The following is a 274-amino-acid chain: Large ribosomal subunit protein uL2 (274 aa).

The interval 223 to 274 is disordered; the sequence is VAMNPVDHPHGGGEGRTSGGRHPVTPWGVPTKGYKTRSNKRTDKYIVRRRNK.

It belongs to the universal ribosomal protein uL2 family. As to quaternary structure, part of the 50S ribosomal subunit. Forms a bridge to the 30S subunit in the 70S ribosome.

Its function is as follows. One of the primary rRNA binding proteins. Required for association of the 30S and 50S subunits to form the 70S ribosome, for tRNA binding and peptide bond formation. It has been suggested to have peptidyltransferase activity; this is somewhat controversial. Makes several contacts with the 16S rRNA in the 70S ribosome. The polypeptide is Large ribosomal subunit protein uL2 (Shewanella sp. (strain ANA-3)).